Here is a 473-residue protein sequence, read N- to C-terminus: Photosystem II CP43 reaction center protein (473 aa).

Positions 1-14 are excised as a propeptide; sequence MKTLYSLRRFYHVE. N-acetylthreonine is present on Thr15. Thr15 bears the Phosphothreonine mark. The next 5 membrane-spanning stretches (helical) occupy residues 69–93, 134–155, 178–200, 255–275, and 291–312; these read LFEV…PHLA, LLGP…KDRN, KALY…RKIT, KPFA…LSYS, and WFNN…ASQA. Glu367 is a [CaMn4O5] cluster binding site. A helical membrane pass occupies residues 447–471; it reads RARAAAAGFEKGIDRDFEPVLSMTP.

Belongs to the PsbB/PsbC family. PsbC subfamily. As to quaternary structure, PSII is composed of 1 copy each of membrane proteins PsbA, PsbB, PsbC, PsbD, PsbE, PsbF, PsbH, PsbI, PsbJ, PsbK, PsbL, PsbM, PsbT, PsbX, PsbY, PsbZ, Psb30/Ycf12, at least 3 peripheral proteins of the oxygen-evolving complex and a large number of cofactors. It forms dimeric complexes. It depends on Binds multiple chlorophylls and provides some of the ligands for the Ca-4Mn-5O cluster of the oxygen-evolving complex. It may also provide a ligand for a Cl- that is required for oxygen evolution. PSII binds additional chlorophylls, carotenoids and specific lipids. as a cofactor.

It localises to the plastid. The protein localises to the chloroplast thylakoid membrane. Functionally, one of the components of the core complex of photosystem II (PSII). It binds chlorophyll and helps catalyze the primary light-induced photochemical processes of PSII. PSII is a light-driven water:plastoquinone oxidoreductase, using light energy to abstract electrons from H(2)O, generating O(2) and a proton gradient subsequently used for ATP formation. The polypeptide is Photosystem II CP43 reaction center protein (Capsella bursa-pastoris (Shepherd's purse)).